A 61-amino-acid chain; its full sequence is Conotoxin Vn5.3 (61 aa).

The signal sequence occupies residues 1-19; the sequence is MHCLPVFVILLLLIASAPG. Residues 20–50 constitute a propeptide that is removed on maturation; the sequence is VDVQPKTKNFMTRASLRDFAKKTPKRLSKLR.

This sequence belongs to the conotoxin T superfamily. In terms of processing, contains 2 disulfide bonds that can be either 'C1-C3, C2-C4' or 'C1-C4, C2-C3', since these disulfide connectivities have been observed for conotoxins with cysteine framework V (for examples, see AC P0DQQ7 and AC P81755). Expressed by the venom duct.

Its subcellular location is the secreted. The sequence is that of Conotoxin Vn5.3 from Conus ventricosus (Mediterranean cone).